A 142-amino-acid chain; its full sequence is Group IIE secretory phospholipase A2 (142 aa).

A signal peptide spans Met-1 to Gly-19. Positions 41, 43, 45, 47, and 49 each coordinate Ca(2+). Disulfide bonds link Cys-44-Cys-135, Cys-46-Cys-62, Cys-61-Cys-115, Cys-67-Cys-142, Cys-68-Cys-108, Cys-77-Cys-101, and Cys-95-Cys-106. Residue His-65 is part of the active site. Residue Asp-66 coordinates Ca(2+). The active site involves Asp-109. 2 residues coordinate Ca(2+): Tyr-130 and Asn-132.

Belongs to the phospholipase A2 family. It depends on Ca(2+) as a cofactor. In terms of tissue distribution, restricted to the brain, heart, lung, and placenta.

It localises to the secreted. The protein resides in the cytoplasm. The enzyme catalyses a 1,2-diacyl-sn-glycero-3-phosphoethanolamine + H2O = a 1-acyl-sn-glycero-3-phosphoethanolamine + a fatty acid + H(+). It catalyses the reaction 1-hexadecanoyl-2-(9Z-octadecenoyl)-sn-glycero-3-phosphoethanolamine + H2O = 1-hexadecanoyl-sn-glycero-3-phosphoethanolamine + (9Z)-octadecenoate + H(+). It carries out the reaction 1-hexadecanoyl-2-(9Z,12Z-octadecadienoyl)-sn-glycero-3-phosphoethanolamine + H2O = 1-hexadecanoyl-sn-glycero-3-phosphoethanolamine + (9Z,12Z)-octadecadienoate + H(+). The catalysed reaction is 1-hexadecanoyl-2-(5Z,8Z,11Z,14Z-eicosatetraenoyl)-sn-glycero-3-phosphoethanolamine + H2O = 1-hexadecanoyl-sn-glycero-3-phosphoethanolamine + (5Z,8Z,11Z,14Z)-eicosatetraenoate + H(+). The enzyme catalyses 1,2-dihexadecanoyl-sn-glycero-3-phospho-(1'-sn-glycerol) + H2O = 1-hexadecanoyl-sn-glycero-3-phospho-(1'-sn-glycerol) + hexadecanoate + H(+). It catalyses the reaction 1-hexadecanoyl-2-(9Z-octadecenoyl)-sn-glycero-3-phosphoglycerol + H2O = 1-hexadecanoyl-sn-glycero-3-phosphoglycerol + (9Z)-octadecenoate + H(+). It carries out the reaction a 1,2-diacyl-sn-glycero-3-phosphocholine + H2O = a 1-acyl-sn-glycero-3-phosphocholine + a fatty acid + H(+). The catalysed reaction is 1,2-dihexadecanoyl-sn-glycero-3-phosphocholine + H2O = 1-hexadecanoyl-sn-glycero-3-phosphocholine + hexadecanoate + H(+). The enzyme catalyses 1-hexadecanoyl-2-(9Z-octadecenoyl)-sn-glycero-3-phosphocholine + H2O = 1-hexadecanoyl-sn-glycero-3-phosphocholine + (9Z)-octadecenoate + H(+). It catalyses the reaction 1-hexadecanoyl-2-(9Z,12Z-octadecadienoyl)-sn-glycero-3-phosphocholine + H2O = (9Z,12Z)-octadecadienoate + 1-hexadecanoyl-sn-glycero-3-phosphocholine + H(+). It carries out the reaction 1-hexadecanoyl-2-(4Z,7Z,10Z,13Z,16Z,19Z-docosahexaenoyl)-sn-glycero-3-phosphocholine + H2O = (4Z,7Z,10Z,13Z,16Z,19Z)-docosahexaenoate + 1-hexadecanoyl-sn-glycero-3-phosphocholine + H(+). In terms of biological role, secretory calcium-dependent phospholipase A2 that primarily targets extracellular phospholipids. Hydrolyzes the ester bond of the fatty acyl group attached at sn-2 position of phospholipids (phospholipase A2 activity), releasing various unsaturated fatty acids including oleoate, linoleoate, arachidonate, docosahexaenoate and lysophosphatidylethanolamines in preference to lysophosphatidylcholines. In response to high-fat diet, hydrolyzes minor lipoprotein phospholipids including phosphatidylserines, phosphatidylinositols and phosphatidylglycerols, altering lipoprotein composition and fat storage in adipose tissue and liver. May act in an autocrine and paracrine manner. Contributes to lipid remodeling of cellular membranes and generation of lipid mediators involved in pathogen clearance. Cleaves sn-2 fatty acyl chains of phosphatidylglycerols and phosphatidylethanolamines, which are major components of membrane phospholipids in bacteria. Acts as a hair follicle phospholipase A2. Selectively releases lysophosphatidylethanolamines (LPE) and various unsaturated fatty acids in skin to regulate hair follicle homeostasis. May regulate the inflammatory response by releasing arachidonate, a precursor of prostaglandins and leukotrienes. Upon allergen exposure, may participate in allergic inflammatory response by enhancing leukotriene C4 synthesis and degranulation in mast cells. The sequence is that of Group IIE secretory phospholipase A2 (PLA2G2E) from Homo sapiens (Human).